A 285-amino-acid chain; its full sequence is Pantothenate synthetase (285 aa).

Residue 30–37 (MGNLHDGH) coordinates ATP. H37 (proton donor) is an active-site residue. Q61 serves as a coordination point for (R)-pantoate. Beta-alanine is bound at residue Q61. 148–151 (GEKD) provides a ligand contact to ATP. (R)-pantoate is bound at residue Q154. 185-188 (RSSR) is a binding site for ATP.

Belongs to the pantothenate synthetase family. As to quaternary structure, homodimer.

It is found in the cytoplasm. The catalysed reaction is (R)-pantoate + beta-alanine + ATP = (R)-pantothenate + AMP + diphosphate + H(+). The protein operates within cofactor biosynthesis; (R)-pantothenate biosynthesis; (R)-pantothenate from (R)-pantoate and beta-alanine: step 1/1. Catalyzes the condensation of pantoate with beta-alanine in an ATP-dependent reaction via a pantoyl-adenylate intermediate. This is Pantothenate synthetase from Alcanivorax borkumensis (strain ATCC 700651 / DSM 11573 / NCIMB 13689 / SK2).